Reading from the N-terminus, the 134-residue chain is Small ribosomal subunit protein bS6 (134 aa).

It belongs to the bacterial ribosomal protein bS6 family.

Binds together with bS18 to 16S ribosomal RNA. The sequence is that of Small ribosomal subunit protein bS6 from Chlorobium phaeobacteroides (strain BS1).